The following is a 233-amino-acid chain: Purine nucleoside phosphorylase DeoD-type (233 aa).

His-4 is a binding site for a purine D-ribonucleoside. Residues Gly-20, Arg-24, Arg-43, and 87 to 90 (RIGT) contribute to the phosphate site. A purine D-ribonucleoside contacts are provided by residues 179–181 (EME) and 203–204 (SD). Asp-204 serves as the catalytic Proton donor.

Belongs to the PNP/UDP phosphorylase family. In terms of assembly, homohexamer; trimer of homodimers.

It catalyses the reaction a purine D-ribonucleoside + phosphate = a purine nucleobase + alpha-D-ribose 1-phosphate. It carries out the reaction a purine 2'-deoxy-D-ribonucleoside + phosphate = a purine nucleobase + 2-deoxy-alpha-D-ribose 1-phosphate. Catalyzes the reversible phosphorolytic breakdown of the N-glycosidic bond in the beta-(deoxy)ribonucleoside molecules, with the formation of the corresponding free purine bases and pentose-1-phosphate. The polypeptide is Purine nucleoside phosphorylase DeoD-type (Thermoanaerobacter pseudethanolicus (strain ATCC 33223 / 39E) (Clostridium thermohydrosulfuricum)).